A 255-amino-acid chain; its full sequence is Zinc finger CCCH domain-containing protein 37 (255 aa).

2 consecutive C3H1-type zinc fingers follow at residues Ala98 to Phe128 and Tyr137 to Ala159.

This chain is Zinc finger CCCH domain-containing protein 37, found in Oryza sativa subsp. japonica (Rice).